Reading from the N-terminus, the 177-residue chain is uncharacterized protein (177 aa).

This is an uncharacterized protein from Acanthamoeba polyphaga (Amoeba).